Here is a 153-residue protein sequence, read N- to C-terminus: 6,7-dimethyl-8-ribityllumazine synthase (153 aa).

5-amino-6-(D-ribitylamino)uracil contacts are provided by residues Phe21, Ala55 to Glu57, and Thr79 to Ile81. (2S)-2-hydroxy-3-oxobutyl phosphate is bound at residue Ala84 to Thr85. His87 functions as the Proton donor in the catalytic mechanism. Residue Phe112 participates in 5-amino-6-(D-ribitylamino)uracil binding. Arg126 provides a ligand contact to (2S)-2-hydroxy-3-oxobutyl phosphate.

Belongs to the DMRL synthase family. Forms an icosahedral capsid composed of 60 subunits, arranged as a dodecamer of pentamers.

The catalysed reaction is (2S)-2-hydroxy-3-oxobutyl phosphate + 5-amino-6-(D-ribitylamino)uracil = 6,7-dimethyl-8-(1-D-ribityl)lumazine + phosphate + 2 H2O + H(+). The protein operates within cofactor biosynthesis; riboflavin biosynthesis; riboflavin from 2-hydroxy-3-oxobutyl phosphate and 5-amino-6-(D-ribitylamino)uracil: step 1/2. Catalyzes the formation of 6,7-dimethyl-8-ribityllumazine by condensation of 5-amino-6-(D-ribitylamino)uracil with 3,4-dihydroxy-2-butanone 4-phosphate. This is the penultimate step in the biosynthesis of riboflavin. The chain is 6,7-dimethyl-8-ribityllumazine synthase from Bacillus anthracis (strain A0248).